Reading from the N-terminus, the 306-residue chain is Aspartate carbamoyltransferase catalytic subunit (306 aa).

Residues arginine 55 and threonine 56 each contribute to the carbamoyl phosphate site. L-aspartate is bound at residue lysine 84. Arginine 105, histidine 133, and glutamine 136 together coordinate carbamoyl phosphate. Residues arginine 166 and arginine 227 each contribute to the L-aspartate site. Positions 265 and 266 each coordinate carbamoyl phosphate.

Belongs to the aspartate/ornithine carbamoyltransferase superfamily. ATCase family. Heterododecamer (2C3:3R2) of six catalytic PyrB chains organized as two trimers (C3), and six regulatory PyrI chains organized as three dimers (R2).

The catalysed reaction is carbamoyl phosphate + L-aspartate = N-carbamoyl-L-aspartate + phosphate + H(+). Its pathway is pyrimidine metabolism; UMP biosynthesis via de novo pathway; (S)-dihydroorotate from bicarbonate: step 2/3. In terms of biological role, catalyzes the condensation of carbamoyl phosphate and aspartate to form carbamoyl aspartate and inorganic phosphate, the committed step in the de novo pyrimidine nucleotide biosynthesis pathway. This Neisseria meningitidis serogroup C / serotype 2a (strain ATCC 700532 / DSM 15464 / FAM18) protein is Aspartate carbamoyltransferase catalytic subunit.